We begin with the raw amino-acid sequence, 314 residues long: Fibrinogen-like protein 1 (314 aa).

Positions 1–22 (MGEIRSFLLVTIALMMGREIWA) are cleaved as a signal peptide. Residues 25–59 (NSKCLLEQERLRAQVQQLETRVKQQQARIAQLMHE) are a coiled coil. Residues 76–308 (LGGKRQYADC…SVVMKIRPND (233 aa)) enclose the Fibrinogen C-terminal domain. 2 disulfide bridges follow: C85–C114 and C250–C263.

In terms of assembly, homodimer. Interacts (via the Fibrinogen C-terminal domain) with LAG3 (via Ig-like domains 1 and 2).

The protein localises to the secreted. Functionally, immune suppressive molecule that inhibits antigen-specific T-cell activation by acting as a major ligand of LAG3. Responsible for LAG3 T-cell inhibitory function. Binds LAG3 independently from MHC class II (MHC-II). Secreted by, and promotes growth of, hepatocytes. This Mesocricetus auratus (Golden hamster) protein is Fibrinogen-like protein 1.